Reading from the N-terminus, the 128-residue chain is Early E3 14.5 kDa protein (128 aa).

This sequence belongs to the adenoviridae E3_15 family.

Protects virus-infected cells from TNF-induced cytolysis. In Human adenovirus C serotype 5 (HAdV-5), this protein is Early E3 14.5 kDa protein.